We begin with the raw amino-acid sequence, 158 residues long: Protein Smg homolog (158 aa).

It belongs to the Smg family.

The sequence is that of Protein Smg homolog from Shewanella sp. (strain MR-4).